A 418-amino-acid polypeptide reads, in one-letter code: Acetylornithine aminotransferase (418 aa).

Pyridoxal 5'-phosphate contacts are provided by residues 116–117 (GA) and Phe149. A N(2)-acetyl-L-ornithine-binding site is contributed by Arg152. 240-243 (DEVQ) is a binding site for pyridoxal 5'-phosphate. An N6-(pyridoxal phosphate)lysine modification is found at Lys269. N(2)-acetyl-L-ornithine is bound at residue Ser296. Position 297 (Thr297) interacts with pyridoxal 5'-phosphate.

This sequence belongs to the class-III pyridoxal-phosphate-dependent aminotransferase family. ArgD subfamily. As to quaternary structure, homodimer. Pyridoxal 5'-phosphate serves as cofactor.

The protein localises to the cytoplasm. The enzyme catalyses N(2)-acetyl-L-ornithine + 2-oxoglutarate = N-acetyl-L-glutamate 5-semialdehyde + L-glutamate. It participates in amino-acid biosynthesis; L-arginine biosynthesis; N(2)-acetyl-L-ornithine from L-glutamate: step 4/4. The protein is Acetylornithine aminotransferase of Prochlorococcus marinus (strain MIT 9313).